We begin with the raw amino-acid sequence, 542 residues long: Putative beta-glucosidase 23 (542 aa).

The N-terminal stretch at 1–29 is a signal peptide; that stretch reads MAACTSSLVSLLLLLLLLLLLLVAGEATA. Asn34 carries N-linked (GlcNAc...) asparagine glycosylation. Gln88 serves as a coordination point for a beta-D-glucoside. Asn135 carries an N-linked (GlcNAc...) asparagine glycan. An a beta-D-glucoside-binding site is contributed by His216. The Proton donor role is filled by Glu262. The cysteines at positions 281 and 289 are disulfide-linked. Tyr405 provides a ligand contact to a beta-D-glucoside. Asn445 carries N-linked (GlcNAc...) asparagine glycosylation. Positions 476 and 492 each coordinate a beta-D-glucoside.

This sequence belongs to the glycosyl hydrolase 1 family.

The enzyme catalyses Hydrolysis of terminal, non-reducing beta-D-glucosyl residues with release of beta-D-glucose.. The sequence is that of Putative beta-glucosidase 23 (BGLU23) from Oryza sativa subsp. japonica (Rice).